The primary structure comprises 147 residues: UPF0306 protein YhbP (147 aa).

It belongs to the UPF0306 family.

This Escherichia coli O17:K52:H18 (strain UMN026 / ExPEC) protein is UPF0306 protein YhbP.